The sequence spans 601 residues: DNA topoisomerase I, mitochondrial (601 aa).

The transit peptide at 1-50 (MRVVRLLRLRAALTLLGEVPRRPASRGVPGSRRTQKGSGARWEKEKHEDG) directs the protein to the mitochondrion. The segment at 22-48 (RPASRGVPGSRRTQKGSGARWEKEKHE) is disordered. Interaction with DNA regions lie at residues 261–262 (KY), 324–329 (RAGNEK), and 421–423 (TAK). Positions 268–601 (CSKLKGETAW…LAMAGEDFEF (334 aa)) constitute a Topo IB-type catalytic domain. Tyr559 (O-(3'-phospho-DNA)-tyrosine intermediate) is an active-site residue.

It belongs to the type IB topoisomerase family. It depends on Ca(2+) as a cofactor. Requires Mg(2+) as cofactor. As to expression, ubiquitous; highest in skeletal muscle, heart, brain and fetal liver.

Its subcellular location is the mitochondrion. The catalysed reaction is ATP-independent breakage of single-stranded DNA, followed by passage and rejoining.. Releases the supercoiling and torsional tension of DNA introduced during duplication of mitochondrial DNA by transiently cleaving and rejoining one strand of the DNA duplex. Introduces a single-strand break via transesterification at a target site in duplex DNA. The scissile phosphodiester is attacked by the catalytic tyrosine of the enzyme, resulting in the formation of a DNA-(3'-phosphotyrosyl)-enzyme intermediate and the expulsion of a 5'-OH DNA strand. The free DNA strand then rotates around the intact phosphodiester bond on the opposing strand, thus removing DNA supercoils. Finally, in the religation step, the DNA 5'-OH attacks the covalent intermediate to expel the active-site tyrosine and restore the DNA phosphodiester backbone. This Homo sapiens (Human) protein is DNA topoisomerase I, mitochondrial (TOP1MT).